The primary structure comprises 275 residues: NH(3)-dependent NAD(+) synthetase (275 aa).

Position 46-53 (46-53 (GISGGQDS)) interacts with ATP. D52 is a Mg(2+) binding site. R140 is a deamido-NAD(+) binding site. Residue T160 participates in ATP binding. Residue E165 participates in Mg(2+) binding. Deamido-NAD(+) contacts are provided by K173 and D180. K189 and T211 together coordinate ATP. Residue 260-261 (HK) coordinates deamido-NAD(+).

It belongs to the NAD synthetase family. In terms of assembly, homodimer.

The enzyme catalyses deamido-NAD(+) + NH4(+) + ATP = AMP + diphosphate + NAD(+) + H(+). It functions in the pathway cofactor biosynthesis; NAD(+) biosynthesis; NAD(+) from deamido-NAD(+) (ammonia route): step 1/1. Catalyzes the ATP-dependent amidation of deamido-NAD to form NAD. Uses ammonia as a nitrogen source. The polypeptide is NH(3)-dependent NAD(+) synthetase (Escherichia coli O139:H28 (strain E24377A / ETEC)).